Consider the following 41-residue polypeptide: Plantazolicin (41 aa).

Residues 1 to 27 (MTQIKVPTALIASVHGEGQHLFEPMAA) constitute a propeptide that is removed on maturation. At Arg28 the chain carries N2,N2-dimethylarginine. Residues 28–29 (RC) constitute a cross-link (thiazole-4-carboxylic acid (Arg-Cys)). Cross-links (5-methyloxazole-4-carboxylic acid (Cys-Thr)) lie at residues 29–30 (CT) and 31–32 (CT). A cross-link (thiazole-4-carboxylic acid (Thr-Cys)) is located at residues 30 to 31 (TC). The 5-methyloxazole-4-carboxylic acid (Thr-Thr) cross-link spans 32 to 33 (TT). The oxazole-4-carboxylic acid (Ile-Ser) cross-link spans 35-36 (IS). 3 cross-links (oxazole-4-carboxylic acid (Ser-Ser)) span residues 36 to 37 (SS), 37 to 38 (SS), and 38 to 39 (SS). A cross-link (5-methyloxazoline-4-carboxylic acid (Ser-Thr)) is located at residues 39–40 (ST).

Post-translationally, maturation of thiazole and oxazole containing antibiotics involves the enzymatic condensation of a Cys, Ser or Thr with the alpha-carbonyl of the preceding amino acid to form a thioether or ether bond, then dehydration to form a double bond with the alpha-amino nitrogen. Thiazoline or oxazoline ring are dehydrogenated to form thiazole or oxazole rings. 2 forms exist: plantazolicin A and plantazolicin B. The structural difference between them is a dimethylation at Arg-28 in plantazolicin A.

It localises to the secreted. Its subcellular location is the cell wall. In terms of biological role, peptide antibiotic inhibiting growth of Gram-positive bacteria in the dimethylated form plantazolicin A. The desmethyl form plantazolicin B has no antibiotic activity. The mode of action appears to be disruption of cell walls and lysis of cells. Inhibits B.subtilis strain HB0042, B.megaterium strain 7A1 and B.anthracis (MIC=2-4 ug/ml). Weakly inhibits Gram-positive bacteria B.brevis strain ATCC 8246, B.subtilis strain 168, B.cereus strain ATCC 14579 and strain CU1065, B.licheniformis strain ATCC 9789, M.luteus, B.sphaericus, P.granivorans and S.pyogenes (MIC=128 ug/ml). Does not inhibit B.pumilus, P.polymyxa, Arthrobacter sp., S.aureus, vancomycin-resistant E.faecalis, L.monocytogenes, methicillin-resistant S.aureus or Gram-negative bacteria E.coli strain K12, K.terrigena, Pseudomonas sp. and E.carotovora. The protein is Plantazolicin of Bacillus velezensis (strain DSM 23117 / BGSC 10A6 / LMG 26770 / FZB42) (Bacillus amyloliquefaciens subsp. plantarum).